The primary structure comprises 227 residues: Ribose-5-phosphate isomerase A (227 aa).

Substrate is bound by residues 30–33, 86–89, and 99–104; these read TGST, DGAD, and KGMGGA. Glu-108 acts as the Proton acceptor in catalysis. Lys-126 provides a ligand contact to substrate.

This sequence belongs to the ribose 5-phosphate isomerase family. As to quaternary structure, homodimer.

It carries out the reaction aldehydo-D-ribose 5-phosphate = D-ribulose 5-phosphate. The protein operates within carbohydrate degradation; pentose phosphate pathway; D-ribose 5-phosphate from D-ribulose 5-phosphate (non-oxidative stage): step 1/1. Involved in the first step of the non-oxidative branch of the pentose phosphate pathway. It catalyzes the reversible conversion of ribose-5-phosphate to ribulose 5-phosphate. Can also act on D-ribose-5-diphosphate and D-ribose-5-triphosphate as substrate. The protein is Ribose-5-phosphate isomerase A of Thermus thermophilus (strain ATCC BAA-163 / DSM 7039 / HB27).